The chain runs to 178 residues: GPI mannosyltransferase 2 subunit C167.09 (178 aa).

An N-terminal signal peptide occupies residues 1–20 (MREFRLIFVLLFFLPSFAIA). Over 21 to 152 (NTEIINVETG…LGFLPKSVLP (132 aa)) the chain is Lumenal. N-linked (GlcNAc...) asparagine glycosylation is found at Asn48, Asn49, Asn106, Asn115, and Asn122. The chain crosses the membrane as a helical span at residues 153–173 (IVGFVFVIILIALICMTNLFI). Residues 174-178 (KHKRD) are Cytoplasmic-facing.

In terms of assembly, part of the GPI mannosyltransferase 2 complex composed of gpi18 and C167.09.

Its subcellular location is the endoplasmic reticulum membrane. It functions in the pathway glycolipid biosynthesis; glycosylphosphatidylinositol-anchor biosynthesis. In terms of biological role, essential component of the GPI mannosyltransferase 2 complex. Responsible for the transfer of the second mannose to the glycosylphosphatidylinositol during GPI precursor assembly. The protein is GPI mannosyltransferase 2 subunit C167.09 of Schizosaccharomyces pombe (strain 972 / ATCC 24843) (Fission yeast).